The primary structure comprises 146 residues: Endothelial differentiation-related factor 1 homolog (146 aa).

Residues 13-53 form a disordered region; the sequence is RKKGSAAQSKSKQAVTAAQRKGEAVETSKKWAAGQNKQHVV. A compositionally biased stretch (low complexity) spans 17–31; sequence SAAQSKSKQAVTAAQ. Basic and acidic residues predominate over residues 32–41; that stretch reads RKGEAVETSK. Residues 80-134 enclose the HTH cro/C1-type domain; the sequence is IQQGRQNKGLTQKDLATKINEKPQIIAEYECGKAIPNNQVMGKIERAIGLKLRGK. A DNA-binding region (H-T-H motif) is located at residues 91-110; that stretch reads QKDLATKINEKPQIIAEYEC.

The protein resides in the nucleus. Functionally, probable transcriptional coactivator. This is Endothelial differentiation-related factor 1 homolog (edf1) from Danio rerio (Zebrafish).